The primary structure comprises 260 residues: Ribonuclease HII (260 aa).

An RNase H type-2 domain is found at 73–260 (LHIAGIDEAG…APVQQQLDIV (188 aa)). A divalent metal cation-binding residues include Asp-79, Glu-80, and Asp-171.

The protein belongs to the RNase HII family. Requires Mn(2+) as cofactor. Mg(2+) serves as cofactor.

The protein localises to the cytoplasm. It carries out the reaction Endonucleolytic cleavage to 5'-phosphomonoester.. Functionally, endonuclease that specifically degrades the RNA of RNA-DNA hybrids. This chain is Ribonuclease HII, found in Desulfitobacterium hafniense (strain DSM 10664 / DCB-2).